Reading from the N-terminus, the 143-residue chain is Antiholin-like protein LrgA (143 aa).

Helical transmembrane passes span 6 to 26, 30 to 50, 61 to 81, and 97 to 117; these read VYSF…SNII, LPIP…LLCL, LGTA…ISVI, and VIVV…QFIL.

It belongs to the CidA/LrgA family. LrgA subfamily.

It is found in the cell membrane. Functionally, inhibits the expression or activity of extracellular murein hydrolases by interacting, possibly with LrgB, with the holin-like protein CidA. The LrgAB and CidA proteins may affect the proton motive force of the membrane. May be involved in programmed cell death (PCD), possibly triggering PCD in response to antibiotics and environmental stresses. In Bacillus cereus (strain AH187), this protein is Antiholin-like protein LrgA.